A 273-amino-acid polypeptide reads, in one-letter code: Undecaprenyl-diphosphatase (273 aa).

A run of 8 helical transmembrane segments spans residues 3–23 (IVEI…EFAP), 48–68 (AANT…VVVF), 92–112 (MQVI…EDYI), 116–136 (LFST…MIAA), 152–172 (ITYK…WPGF), 193–213 (ADFT…LSLL), 220–240 (TIDA…FALI), and 252–272 (IRLV…YIVY).

The protein belongs to the UppP family.

Its subcellular location is the cell membrane. The catalysed reaction is di-trans,octa-cis-undecaprenyl diphosphate + H2O = di-trans,octa-cis-undecaprenyl phosphate + phosphate + H(+). In terms of biological role, catalyzes the dephosphorylation of undecaprenyl diphosphate (UPP). Confers resistance to bacitracin. The chain is Undecaprenyl-diphosphatase from Geobacillus sp. (strain WCH70).